The chain runs to 149 residues: Transcriptional regulator MraZ (149 aa).

2 SpoVT-AbrB domains span residues 6–52 and 81–124; these read RSYR…TPED and VEEL…SEEE.

This sequence belongs to the MraZ family. As to quaternary structure, forms oligomers.

The protein localises to the cytoplasm. Its subcellular location is the nucleoid. The protein is Transcriptional regulator MraZ of Oleidesulfovibrio alaskensis (strain ATCC BAA-1058 / DSM 17464 / G20) (Desulfovibrio alaskensis).